We begin with the raw amino-acid sequence, 384 residues long: Probable zinc-binding alcohol dehydrogenase Rv1895 (384 aa).

Residues C38, H59, C89, C92, C95, and C103 each coordinate Zn(2+).

This sequence belongs to the zinc-containing alcohol dehydrogenase family. It depends on Zn(2+) as a cofactor.

The enzyme catalyses a primary alcohol + NAD(+) = an aldehyde + NADH + H(+). It catalyses the reaction a secondary alcohol + NAD(+) = a ketone + NADH + H(+). This chain is Probable zinc-binding alcohol dehydrogenase Rv1895, found in Mycobacterium tuberculosis (strain ATCC 25618 / H37Rv).